Reading from the N-terminus, the 523-residue chain is MASATSNNPASSSMSPRRISGNHGSPTASVAQSPRRPSRQVSSPWTQIVRGESEPIAAAAAVAGPSSPQSRAPIEPIASVSVAAPTAAVLTVEAAAGDEKSEASGGQDNAGKKPVWKRPSNGASEVGPVMGASSWPALSETTKAPSNKSSSDSLKSLGDVPSSSSASSSVPVTQGIANASVPAPKQAGRANPNPTPNHSRQRSFKQRNGASGSANGTVSQPSAQGSFTELPSHNPSPRGQNQKNGFASQNHGGTENPSQRDSYRNQNGNHHQSHGGRRNQEHGNQNWTFQRSFNGREGNAQSQRGTPAFVRHPSPTVQPIPQFMAAQPFPSHIPFPTELAQSSYYPRMPYMTPIPHGPQFFYHYQDPPLHMKLHKQIQYYFSDENLITDIYLRGFMNNEGFVPLRVVAGFKKVAELTDNIQQIVEALQNSPHVEVQGDFIRKRDNWQNWVLRRNPTGSGPQSVDRADAVAKRLGNLSVDQSSADPIGGSSSQLQPTEALSDDQQQSSSTAPVSNHNAPDGANR.

A compositionally biased stretch (low complexity) spans 1-16; sequence MASATSNNPASSSMSP. Disordered stretches follow at residues 1-52 and 95-313; these read MASA…VRGE and AAGD…VRHP. Ala2 bears the N-acetylalanine mark. Positions 22–31 are enriched in polar residues; sequence NHGSPTASVA. 2 stretches are compositionally biased toward low complexity: residues 32 to 44 and 146 to 169; these read QSPRRPSRQVSSP and SNKSSSDSLKSLGDVPSSSSASSS. The residue at position 33 (Ser33) is a Phosphoserine. 2 stretches are compositionally biased toward polar residues: residues 206-270 and 282-305; these read QRNG…NGNH and HGNQNWTFQRSFNGREGNAQSQRG. An HTH La-type RNA-binding domain is found at 363-452; that stretch reads HYQDPPLHMK…RDNWQNWVLR (90 aa). Positions 474 to 523 are disordered; it reads GNLSVDQSSADPIGGSSSQLQPTEALSDDQQQSSSTAPVSNHNAPDGANR. A compositionally biased stretch (polar residues) spans 477 to 516; it reads SVDQSSADPIGGSSSQLQPTEALSDDQQQSSSTAPVSNHN.

It belongs to the LARP family. In terms of tissue distribution, age-dependent accumulation in rosette leaves.

The protein localises to the cytoplasm. Functionally, promotes leaf senescence mediated by abscisic acid (ABA), salicylic acid (SA) and jasmonic acid (MeJA), probably though the induction of expression of senescence-associated genes (SAGs) and defense-related genes. The protein is La-related protein 1C (LARP1C) of Arabidopsis thaliana (Mouse-ear cress).